The primary structure comprises 263 residues: Cobalt-precorrin-6A reductase (263 aa).

It belongs to the precorrin-6x reductase family.

It catalyses the reaction Co-precorrin-6B + NAD(+) = Co-precorrin-6A + NADH + H(+). Its pathway is cofactor biosynthesis; adenosylcobalamin biosynthesis; cob(II)yrinate a,c-diamide from sirohydrochlorin (anaerobic route): step 7/10. In terms of biological role, catalyzes the reduction of the macrocycle of cobalt-precorrin-6A to cobalt-precorrin-6B. In Salmonella typhimurium (strain LT2 / SGSC1412 / ATCC 700720), this protein is Cobalt-precorrin-6A reductase (cbiJ).